Reading from the N-terminus, the 77-residue chain is U8-lycotoxin-Ls1q (77 aa).

The N-terminal stretch at 1 to 20 is a signal peptide; that stretch reads MKLMIFAGLVLFAIVSLIEA. Residues 21-26 constitute a propeptide that is removed on maturation; the sequence is QAEHEK.

This sequence belongs to the neurotoxin 19 (CSTX) family. 08 (U8-Lctx) subfamily. Contains 4 disulfide bonds. Expressed by the venom gland.

The protein localises to the secreted. This chain is U8-lycotoxin-Ls1q, found in Lycosa singoriensis (Wolf spider).